The following is a 508-amino-acid chain: Histidine ammonia-lyase (508 aa).

Positions 141 to 143 form a cross-link, 5-imidazolinone (Ala-Gly); sequence ASG. 2,3-didehydroalanine (Ser) is present on serine 142.

It belongs to the PAL/histidase family. In terms of processing, contains an active site 4-methylidene-imidazol-5-one (MIO), which is formed autocatalytically by cyclization and dehydration of residues Ala-Ser-Gly.

The protein resides in the cytoplasm. The enzyme catalyses L-histidine = trans-urocanate + NH4(+). The protein operates within amino-acid degradation; L-histidine degradation into L-glutamate; N-formimidoyl-L-glutamate from L-histidine: step 1/3. The chain is Histidine ammonia-lyase (hutH) from Bacillus subtilis (strain 168).